Reading from the N-terminus, the 89-residue chain is Small ribosomal subunit protein uS19 (89 aa).

Belongs to the universal ribosomal protein uS19 family.

Protein S19 forms a complex with S13 that binds strongly to the 16S ribosomal RNA. The protein is Small ribosomal subunit protein uS19 of Brachyspira hyodysenteriae (strain ATCC 49526 / WA1).